The chain runs to 357 residues: Heat-inducible transcription repressor HrcA (357 aa).

The protein belongs to the HrcA family.

Its function is as follows. Negative regulator of class I heat shock genes (grpE-dnaK-dnaJ and groELS operons). Prevents heat-shock induction of these operons. The polypeptide is Heat-inducible transcription repressor HrcA (Chlorobium phaeobacteroides (strain DSM 266 / SMG 266 / 2430)).